The chain runs to 88 residues: Parvalbumin beta 3 (88 aa).

Residue A1 is modified to N-acetylalanine. An EF-hand domain is found at K31–G66. Ca(2+) contacts are provided by D44, D46, S48, F50, E52, E55, and E81.

It belongs to the parvalbumin family.

In muscle, parvalbumin is thought to be involved in relaxation after contraction. It binds two calcium ions. The chain is Parvalbumin beta 3 from Merluccius productus (North Pacific hake).